Consider the following 100-residue polypeptide: Urease subunit gamma 2 (100 aa).

This sequence belongs to the urease gamma subunit family. As to quaternary structure, heterotrimer of UreA (gamma), UreB (beta) and UreC (alpha) subunits. Three heterotrimers associate to form the active enzyme.

The protein resides in the cytoplasm. The enzyme catalyses urea + 2 H2O + H(+) = hydrogencarbonate + 2 NH4(+). It functions in the pathway nitrogen metabolism; urea degradation; CO(2) and NH(3) from urea (urease route): step 1/1. This is Urease subunit gamma 2 from Psychrobacter cryohalolentis (strain ATCC BAA-1226 / DSM 17306 / VKM B-2378 / K5).